The primary structure comprises 289 residues: Rhodopsin (289 aa).

Residues 1–7 (YLVSPAA) lie on the Extracellular side of the membrane. The chain crosses the membrane as a helical span at residues 8 to 32 (YAALGAYMFLLILIGFPVNFLTLYV). Residues 33–44 (TLEHKKLRTPLN) lie on the Cytoplasmic side of the membrane. A helical transmembrane segment spans residues 45 to 67 (YILLNLAVADLFMVLGGFTTTMY). The Extracellular segment spans residues 68–81 (TSMHGYFVLGRLGC). A disulfide bridge connects residues Cys-81 and Cys-158. Residues 82–104 (NLEGFFATLGGEIALWSLVVLAI) traverse the membrane as a helical segment. The 'Ionic lock' involved in activated form stabilization signature appears at 105–107 (ERW). At 105–123 (ERWIVVCKPISKFRFTEDN) the chain is on the cytoplasmic side. The helical transmembrane segment at 124 to 144 (AIMGLAFSWVMALACAVPPLV) threads the bilayer. Residues 145-173 (GWLRYIPEGMQCTCGVDYYTRAEGFDNES) are Extracellular-facing. A glycan (N-linked (GlcNAc...) asparagine) is linked at Asn-171. The chain crosses the membrane as a helical span at residues 174–195 (FVIYMFIVHFLIPLSVIFFCYG). Residues 196–223 (RLLCAVKEAAAAQQESETTQRAEKEVSR) are Cytoplasmic-facing. Residues 224–245 (MVVIMVIGFLVCWLPYASVAWW) form a helical membrane-spanning segment. The Extracellular segment spans residues 246–257 (IFCNQGSDFGPI). The helical transmembrane segment at 258 to 279 (FMTLPSFFAKRPAIYNPMIYIC) threads the bilayer. Lys-267 is subject to N6-(retinylidene)lysine. Residues 280-289 (MNKQFRHCMI) are Cytoplasmic-facing.

It belongs to the G-protein coupled receptor 1 family. Opsin subfamily. Post-translationally, phosphorylated on some or all of the serine and threonine residues present in the C-terminal region. Contains one covalently linked retinal chromophore.

Its subcellular location is the membrane. The protein localises to the cell projection. The protein resides in the cilium. It localises to the photoreceptor outer segment. Photoreceptor required for image-forming vision at low light intensity. While most salt water fish species use retinal as chromophore, most freshwater fish use 3-dehydroretinal, or a mixture of retinal and 3-dehydroretinal. Light-induced isomerization of 11-cis to all-trans retinal triggers a conformational change that activates signaling via G-proteins. Subsequent receptor phosphorylation mediates displacement of the bound G-protein alpha subunit by arrestin and terminates signaling. This chain is Rhodopsin (rho), found in Batrachocottus nikolskii (Fat sculpin).